We begin with the raw amino-acid sequence, 40 residues long: Chaperonin HSP60, mitochondrial (40 aa).

The protein belongs to the chaperonin (HSP60) family.

It localises to the mitochondrion. Implicated in mitochondrial protein import and macromolecular assembly. May facilitate the correct folding of imported proteins. May also prevent misfolding and promote the refolding and proper assembly of unfolded polypeptides generated under stress conditions in the mitochondrial matrix. The sequence is that of Chaperonin HSP60, mitochondrial from Solanum tuberosum (Potato).